A 209-amino-acid chain; its full sequence is MEGGGRSSNKSTSGLAGFFGAGGAGYSNADLAGVPLTGMNPLSPYLNVDPRYLVQDTDEFILPTGANKTRGRFELAFFTIGGCCMTGAAFGAMNGLRLGLKETQSMAWSKPRNVQILNMVTRQGALWANTLGSLALLYSAFGVIIEKTRGAEDDLNTVAAGTMTGMLYKCTGGLRGIARGGLAGLTLTSLYALYNNWVHMKGSLLQQSL.

A run of 3 helical transmembrane segments spans residues 73–93 (FELA…FGAM), 125–145 (ALWA…GVII), and 181–197 (GLAG…YNNW).

This sequence belongs to the Tim17/Tim22/Tim23 family. Component of the TIM23 complex at least composed of TIMM23, TIMM17 (TIMM17A or TIMM17B) and TIMM50; within this complex, directly interacts with TIMM50. The complex interacts with the TIMM44 component of the PAM complex and with DNAJC15. Upon mitochondrial depolarization, interacts with PINK1; the interaction is required for PINK1 accumulation at the outer mitochondrial membrane, kinase activation by autophosphorylation and PRKN recruitement to mitochondria.

The protein resides in the mitochondrion inner membrane. Functionally, essential component of the TIM23 complex, a complex that mediates the translocation of transit peptide-containing proteins across the mitochondrial inner membrane. Has a role in the activation of stress-induced mitophagy by protecting PINK1 from OMA1-mediated degradation and facilitating its accumulation at the outer mitochondrial membrane in response to depolarization. This chain is Mitochondrial import inner membrane translocase subunit Tim23 (Timm23), found in Mus musculus (Mouse).